The primary structure comprises 242 residues: MLSAYYNDPFLSDFCLGKIPLRLASRKSPLAVLQAHECLRRLQTFFPRLWGQVITETTQGDLDQHTPLHSVENTGFFTDDIDFLVQSGKCDLAIHSAKDLPEKPKARVIAITASIDPRDILVFQEKYLLQPFPSRLRIGCSSDRRRALISSLYPSAVITDIRGTIQTRLALLDQQKFDAIVMANAAVSRLGLRLPCTVVLPPPYHPFQGRLAITSCHHIASWEKLFLTCKITENINLLHFFS.

The protein belongs to the HMBS family.

It catalyses the reaction 4 porphobilinogen + H2O = hydroxymethylbilane + 4 NH4(+). It participates in porphyrin-containing compound metabolism; protoporphyrin-IX biosynthesis; coproporphyrinogen-III from 5-aminolevulinate: step 2/4. Functionally, tetrapolymerization of the monopyrrole PBG into the hydroxymethylbilane pre-uroporphyrinogen in several discrete steps. This Chlamydia muridarum (strain MoPn / Nigg) protein is Probable porphobilinogen deaminase (hemC).